Consider the following 745-residue polypeptide: Eukaryotic translation initiation factor 3 subunit B (745 aa).

Positions 41–129 (DVIVIEGVPV…HRFSVHRFTD (89 aa)) constitute an RRM domain. WD repeat units follow at residues 189-230 (EHSR…RFMR), 251-293 (WSHE…RSFP), 303-344 (GQLK…LLEK), and 580-625 (GEHY…LQKH). Positions 644-745 (GKDEQKRVRK…IIEETEEVLA (102 aa)) form a coiled coil.

Belongs to the eIF-3 subunit B family. In terms of assembly, component of the eukaryotic translation initiation factor 3 (eIF-3) complex.

It is found in the cytoplasm. Functionally, RNA-binding component of the eukaryotic translation initiation factor 3 (eIF-3) complex, which is involved in protein synthesis of a specialized repertoire of mRNAs and, together with other initiation factors, stimulates binding of mRNA and methionyl-tRNAi to the 40S ribosome. The eIF-3 complex specifically targets and initiates translation of a subset of mRNAs involved in cell proliferation. The chain is Eukaryotic translation initiation factor 3 subunit B from Mycosarcoma maydis (Corn smut fungus).